The sequence spans 128 residues: Small ribosomal subunit protein bS6 (128 aa).

Positions 105–128 (AKVTEEEPVEAAPEAKVETTTEEE) are disordered. Residues 117 to 128 (PEAKVETTTEEE) are compositionally biased toward basic and acidic residues.

This sequence belongs to the bacterial ribosomal protein bS6 family.

Its function is as follows. Binds together with bS18 to 16S ribosomal RNA. The chain is Small ribosomal subunit protein bS6 from Geotalea daltonii (strain DSM 22248 / JCM 15807 / FRC-32) (Geobacter daltonii).